Reading from the N-terminus, the 150-residue chain is D-aminoacyl-tRNA deacylase (150 aa).

The Gly-cisPro motif, important for rejection of L-amino acids signature appears at 138–139; the sequence is GP.

The protein belongs to the DTD family. In terms of assembly, homodimer.

The protein resides in the cytoplasm. It carries out the reaction glycyl-tRNA(Ala) + H2O = tRNA(Ala) + glycine + H(+). The enzyme catalyses a D-aminoacyl-tRNA + H2O = a tRNA + a D-alpha-amino acid + H(+). An aminoacyl-tRNA editing enzyme that deacylates mischarged D-aminoacyl-tRNAs. Also deacylates mischarged glycyl-tRNA(Ala), protecting cells against glycine mischarging by AlaRS. Acts via tRNA-based rather than protein-based catalysis; rejects L-amino acids rather than detecting D-amino acids in the active site. By recycling D-aminoacyl-tRNA to D-amino acids and free tRNA molecules, this enzyme counteracts the toxicity associated with the formation of D-aminoacyl-tRNA entities in vivo and helps enforce protein L-homochirality. This Bacteroides fragilis (strain ATCC 25285 / DSM 2151 / CCUG 4856 / JCM 11019 / LMG 10263 / NCTC 9343 / Onslow / VPI 2553 / EN-2) protein is D-aminoacyl-tRNA deacylase.